The following is a 250-amino-acid chain: UPF0494 membrane protein PB2B2.07c (250 aa).

Helical transmembrane passes span W98–V118, I144–L164, and M179–I199.

The protein belongs to the UPF0494 family.

It is found in the cytoplasm. The protein localises to the endoplasmic reticulum. Its subcellular location is the golgi apparatus. It localises to the membrane. This Schizosaccharomyces pombe (strain 972 / ATCC 24843) (Fission yeast) protein is UPF0494 membrane protein PB2B2.07c.